We begin with the raw amino-acid sequence, 115 residues long: Chaperone protein PrsD (115 aa).

It belongs to the periplasmic pilus chaperone family.

It is found in the periplasm. In terms of biological role, mediates assembly of pili by forming soluble multimeric complexes with pili subunits as an intermediate step in the assembly process. This chain is Chaperone protein PrsD (prsD), found in Escherichia coli.